The following is a 228-amino-acid chain: MRIKIFMLVTAVVLLCCSGVATAAPKTYCEELKGTDTGQACQIQMSDPAYNINISLPSYYPDQKSLENYIAQTRDKFLSAATSSTPREAPYELNITSATYQSAIPPRGTQAVVLKVYQNAGGTHPTTTYKAFDWDQAYRKPITYDTLWQADTDPLPVVFPIVQGELSKQTGQQVSIAPNAGLDPVNYQNFAVTNDGVIFFFNPGELLPEAAGPTQVLVPRSAIDSMLA.

An N-terminal signal peptide occupies residues methionine 1–alanine 23.

This sequence belongs to the RsiV family.

It localises to the secreted. In Mycobacterium bovis (strain ATCC BAA-935 / AF2122/97), this protein is Immunogenic protein MPB64 (mpb64).